A 363-amino-acid polypeptide reads, in one-letter code: Class I histocompatibility antigen, Gogo-B*0201 alpha chain (363 aa).

A signal peptide spans 1 to 24 (MQVTAPRTLLLLLSAALALTETWA). The tract at residues 25-114 (GSHSMRYFHT…LRGYYNQSED (90 aa)) is alpha-1. Residues 25 to 308 (GSHSMRYFHT…EPSSQSTIPI (284 aa)) are Extracellular-facing. N-linked (GlcNAc...) asparagine glycosylation occurs at asparagine 110. The alpha-2 stretch occupies residues 115-206 (GSHTIQRMYG…ENGKETLQRA (92 aa)). 2 disulfide bridges follow: cysteine 125–cysteine 188 and cysteine 227–cysteine 283. The segment at 207-298 (DPPKTHVTHH…GLPEPLTLRW (92 aa)) is alpha-3. The Ig-like C1-type domain maps to 209–297 (PKTHVTHHPI…EGLPEPLTLR (89 aa)). The connecting peptide stretch occupies residues 299–308 (EPSSQSTIPI). A helical transmembrane segment spans residues 309 to 333 (VGIVAGLAVLVVTVAVVAVVAAVMC). The Cytoplasmic segment spans residues 334-363 (RRKSSGGKGGSYSQAASSDSAQGSDVSLTA). The interval 336–363 (KSSGGKGGSYSQAASSDSAQGSDVSLTA) is disordered. Over residues 344–363 (SYSQAASSDSAQGSDVSLTA) the composition is skewed to low complexity.

This sequence belongs to the MHC class I family. As to quaternary structure, heterodimer of an alpha chain and a beta chain (beta-2-microglobulin).

It localises to the membrane. In terms of biological role, involved in the presentation of foreign antigens to the immune system. The chain is Class I histocompatibility antigen, Gogo-B*0201 alpha chain from Gorilla gorilla gorilla (Western lowland gorilla).